Here is a 160-residue protein sequence, read N- to C-terminus: Cyanate hydratase (160 aa).

Active-site residues include arginine 100, glutamate 103, and serine 126.

It belongs to the cyanase family.

The enzyme catalyses cyanate + hydrogencarbonate + 3 H(+) = NH4(+) + 2 CO2. Its function is as follows. Catalyzes the reaction of cyanate with bicarbonate to produce ammonia and carbon dioxide. This is Cyanate hydratase from Emericella nidulans (strain FGSC A4 / ATCC 38163 / CBS 112.46 / NRRL 194 / M139) (Aspergillus nidulans).